Here is a 459-residue protein sequence, read N- to C-terminus: Cysteine--tRNA ligase (459 aa).

Cys-27 contributes to the Zn(2+) binding site. Residues 29 to 39 (VTVYDDCHIGH) carry the 'HIGH' region motif. Cys-208, His-233, and Glu-237 together coordinate Zn(2+). A 'KMSKS' region motif is present at residues 265–269 (KMSKS). Lys-268 contacts ATP.

This sequence belongs to the class-I aminoacyl-tRNA synthetase family. In terms of assembly, monomer. The cofactor is Zn(2+).

The protein localises to the cytoplasm. It catalyses the reaction tRNA(Cys) + L-cysteine + ATP = L-cysteinyl-tRNA(Cys) + AMP + diphosphate. This Francisella tularensis subsp. mediasiatica (strain FSC147) protein is Cysteine--tRNA ligase.